A 364-amino-acid chain; its full sequence is DNA replication and repair protein RecF (364 aa).

Gly30–Thr37 provides a ligand contact to ATP.

The protein belongs to the RecF family.

It is found in the cytoplasm. Its function is as follows. The RecF protein is involved in DNA metabolism; it is required for DNA replication and normal SOS inducibility. RecF binds preferentially to single-stranded, linear DNA. It also seems to bind ATP. This chain is DNA replication and repair protein RecF, found in Stenotrophomonas maltophilia (strain K279a).